A 371-amino-acid polypeptide reads, in one-letter code: uncharacterized protein (371 aa).

A run of 7 helical transmembrane segments spans residues 9–29, 58–78, 98–118, 133–153, 159–179, 183–203, and 330–350; these read FTLD…VFLI, VLAF…FLAI, LIVA…SFIF, LAPF…VSVI, YDVN…ALAA, ISNF…IGDW, and IIEI…MVVV.

It belongs to the MscS (TC 1.A.23) family.

It localises to the cell membrane. May play a role in resistance to osmotic downshock. This is an uncharacterized protein from Bacillus subtilis (strain 168).